A 347-amino-acid chain; its full sequence is UDP-N-acetylenolpyruvoylglucosamine reductase (347 aa).

The FAD-binding PCMH-type domain occupies 23–197 (LPARAARLLR…LRVRFRLPQA (175 aa)). R174 is a catalytic residue. The active-site Proton donor is the S247. The active site involves E343.

It belongs to the MurB family. It depends on FAD as a cofactor.

It is found in the cytoplasm. The catalysed reaction is UDP-N-acetyl-alpha-D-muramate + NADP(+) = UDP-N-acetyl-3-O-(1-carboxyvinyl)-alpha-D-glucosamine + NADPH + H(+). Its pathway is cell wall biogenesis; peptidoglycan biosynthesis. Its function is as follows. Cell wall formation. In Azoarcus sp. (strain BH72), this protein is UDP-N-acetylenolpyruvoylglucosamine reductase.